A 177-amino-acid chain; its full sequence is uncharacterized protein (177 aa).

A disordered region spans residues L122–N177. 2 stretches are compositionally biased toward basic residues: residues G142–K160 and H168–N177.

This is an uncharacterized protein from Saccharomyces cerevisiae (strain ATCC 204508 / S288c) (Baker's yeast).